A 649-amino-acid chain; its full sequence is Transmembrane and coiled-coil domains protein 1 (649 aa).

Methionine 1 carries the N-acetylmethionine modification. Disordered stretches follow at residues 1 to 37, 58 to 83, 110 to 166, and 197 to 222; these read MEPSGSEQLYEDPDPGGKSQDAEARRQTESEQKLSKM, HQRRRSSVSPHDVQQIQTDPEPEVDL, RVPP…PTSS, and LAQTSSAVASSTDGSIHTESVDGIPD. The Cytoplasmic portion of the chain corresponds to 1–587; sequence MEPSGSEQLY…ARNLLGKLIN (587 aa). A compositionally biased stretch (basic and acidic residues) spans 20-34; sequence QDAEARRQTESEQKL. Positions 64 to 75 are enriched in polar residues; the sequence is SVSPHDVQQIQT. Positions 113–125 are enriched in basic residues; sequence PKMKRGTSLHSRR. Positions 156-166 are enriched in low complexity; the sequence is SSSTTDAPTSS. Residues 197–214 are compositionally biased toward polar residues; it reads LAQTSSAVASSTDGSIHT. Residues 224-310 adopt a coiled-coil conformation; sequence QRTKAAIAHL…KLREVEQNGI (87 aa). A phosphoserine mark is found at serine 378 and serine 410. The tract at residues 411-433 is disordered; the sequence is PKYGSEEDCSSATSGSVGANSTT. A compositionally biased stretch (polar residues) spans 420 to 433; the sequence is SSATSGSVGANSTT. A coiled-coil region spans residues 457–566; that stretch reads ALLHEVQEIR…KMELQQQQQQ (110 aa). 2 helical membrane-spanning segments follow: residues 588–608 and 621–641; these read ILLAVMAVLLVFVSTVANCVV and LFLVAFIAFLWKHWDALFSYV. The Cytoplasmic segment spans residues 642–649; that stretch reads DRLFSPPR.

This sequence belongs to the TEX28 family. As to quaternary structure, may form homodimers and heterodimers with TMCC2 or TMCC3 via the coiled-coil domains. Interacts with ribosomal proteins RPL4 and RPS6.

It is found in the endoplasmic reticulum membrane. In terms of biological role, endoplasmic reticulum membrane protein that promotes endoplasmic reticulum-associated endosome fission. Localizes to contact sites between the endoplasmic reticulum and endosomes and acts by promoting recruitment of the endoplasmic reticulum to endosome tubules for fission. Endosome membrane fission of early and late endosomes is essential to separate regions destined for lysosomal degradation from carriers to be recycled to the plasma membrane. The chain is Transmembrane and coiled-coil domains protein 1 (Tmcc1) from Mus musculus (Mouse).